Here is a 130-residue protein sequence, read N- to C-terminus: Small ribosomal subunit protein uS8 (130 aa).

The protein belongs to the universal ribosomal protein uS8 family. As to quaternary structure, part of the 30S ribosomal subunit. Contacts proteins S5 and S12.

In terms of biological role, one of the primary rRNA binding proteins, it binds directly to 16S rRNA central domain where it helps coordinate assembly of the platform of the 30S subunit. The chain is Small ribosomal subunit protein uS8 from Nitrosococcus oceani (strain ATCC 19707 / BCRC 17464 / JCM 30415 / NCIMB 11848 / C-107).